The primary structure comprises 426 residues: Tyrosine--tRNA ligase (426 aa).

Tyr-35 is an L-tyrosine binding site. Positions 40–49 match the 'HIGH' region motif; it reads PTADSLHIGH. Residues Tyr-172 and Gln-176 each coordinate L-tyrosine. The short motif at 232–236 is the 'KMSKS' region element; the sequence is KLGKS. Residue Lys-235 coordinates ATP. An S4 RNA-binding domain is found at 357–414; it reads ENIKDILVNSKLSKSKNNAKSVILSSSIRINNKKQKSIDFMFKKEDKLFNLFTLIKKG.

This sequence belongs to the class-I aminoacyl-tRNA synthetase family. TyrS type 1 subfamily. As to quaternary structure, homodimer.

Its subcellular location is the cytoplasm. The enzyme catalyses tRNA(Tyr) + L-tyrosine + ATP = L-tyrosyl-tRNA(Tyr) + AMP + diphosphate + H(+). Functionally, catalyzes the attachment of tyrosine to tRNA(Tyr) in a two-step reaction: tyrosine is first activated by ATP to form Tyr-AMP and then transferred to the acceptor end of tRNA(Tyr). This chain is Tyrosine--tRNA ligase, found in Wigglesworthia glossinidia brevipalpis.